Here is a 389-residue protein sequence, read N- to C-terminus: Protein WALLS ARE THIN 1 (389 aa).

The next 10 helical transmembrane spans lie at 18–38, 49–69, 76–96, 111–131, 143–163, 198–218, 230–250, 266–286, 294–314, and 319–339; these read LQLH…HVVS, LVFP…FAYF, PAIT…GITA, TFAS…AALL, GISK…ITLY, WTLG…WLVF, LSVT…IAAF, LFTI…VQIW, VFVA…ASIA, and FYLG…FVLY. 2 consecutive EamA domains span residues 32–161 and 210–339; these read AGFH…SVIT and LSWS…FVLY. Ser-372 bears the Phosphoserine mark.

Belongs to the drug/metabolite transporter (DMT) superfamily. Plant drug/metabolite exporter (P-DME) (TC 2.A.7.4) family. Mostly expressed in stems and hypocotyls, also present in seedlings, root, leaves, flowers and siliques. Ubiquitous, mostly expressed in vascular tissues and secondary wall-forming cells, including developing xylem vessels and fibers.

It is found in the vacuole membrane. Required for secondary wall formation in fibers, especially in short days conditions. Promotes indole metabolism and transport (e.g. tryptophan, neoglucobrassicin and auxin (indole-3-acetic acid)). May prevent salicylic-acid (SA) accumulation. In Arabidopsis thaliana (Mouse-ear cress), this protein is Protein WALLS ARE THIN 1 (WAT1).